The chain runs to 2711 residues: Chromodomain-helicase-DNA-binding protein 6 (2711 aa).

4 stretches are compositionally biased toward basic and acidic residues: residues 1–12 (MKMKIQKKEKQL), 100–115 (EPGE…DREP), 122–151 (EPKE…DGVK), and 158–171 (EASG…KRSC). 2 disordered regions span residues 1-52 (MKMK…EEAA) and 66-243 (EEAD…QVKR). Residues 1–746 (MKMKIQKKEK…MMELRKCCNH (746 aa)) are required for DNA-dependent ATPase activity. Positions 214 to 224 (SLPNPSLQSPE) are enriched in low complexity. Chromo domains follow at residues 291-342 (NIIE…KDPR) and 374-438 (IEID…KHVE). Residues 472 to 646 (LFNWYNRKNC…FSLLNFLEPS (175 aa)) enclose the Helicase ATP-binding domain. 485–492 (DEMGLGKT) is a binding site for ATP. A DEAH box motif is present at residues 597–600 (DEAH). One can recognise a Helicase C-terminal domain in the interval 786 to 955 (LIDKLLPKLI…LSKMEVEDLL (170 aa)). The segment at 1318 to 1389 (SLSAEQGVTD…SDPDKSPWPV (72 aa)) is disordered. Residues 1320-1329 (SAEQGVTDGT) show a composition bias toward polar residues. Residues 1332–1350 (IPERGNIDKEDSAEDKLDG) show a composition bias toward basic and acidic residues. One can recognise a Myb-like domain in the interval 1448 to 1502 (RWTRREQADFYRTVSSFGVVYDQEKKAFDWTQFRIISRLDKKSDESLEHYFYSFV). Ser-1865 is subject to Phosphoserine. Disordered regions lie at residues 1951–1978 (SEDS…TVEG), 1997–2059 (EPWK…ASGI), 2124–2147 (LPTP…ATEH), 2321–2350 (TTLS…QAEK), 2373–2419 (GFGT…RGFL), 2550–2602 (SASL…ITTS), and 2641–2711 (RHSE…EDTN). Residues 2017–2036 (SEPKPEDMDFENKDDYEKDG) show a composition bias toward basic and acidic residues. Composition is skewed to low complexity over residues 2130–2140 (SSSAGSRSSLS) and 2333–2349 (ATSS…SQAE). Residues 2550 to 2563 (SASLASTKSGTSAT) show a composition bias toward low complexity. Residues 2565–2586 (KSTEDKLSGHDVNTDALVDDKP) are compositionally biased toward basic and acidic residues. Polar residues-rich tracts occupy residues 2591 to 2602 (FSDQSEPTITTS) and 2677 to 2688 (SDQNCTESSATV). A compositionally biased stretch (basic and acidic residues) spans 2690 to 2711 (PEREHVAQAREEGLKDSNEDTN).

The protein belongs to the SNF2/RAD54 helicase family. In terms of assembly, interacts with NFE2L2; involved in activation of the transcription. In terms of tissue distribution, widely expressed.

Its subcellular location is the nucleus. It is found in the nucleoplasm. The catalysed reaction is ATP + H2O = ADP + phosphate + H(+). Its function is as follows. ATP-dependent chromatin-remodeling factor. Regulates transcription by disrupting nucleosomes in a largely non-sliding manner which strongly increases the accessibility of chromatin. Activates transcription of specific genes in response to oxidative stress through interaction with NFE2L2. The chain is Chromodomain-helicase-DNA-binding protein 6 (Chd6) from Mus musculus (Mouse).